A 292-amino-acid chain; its full sequence is NAD-dependent protein deacetylase sir-2.4 (292 aa).

Positions 31-292 (IEKLRTLYNH…DEVPIPLKIS (262 aa)) constitute a Deacetylase sirtuin-type domain. NAD(+) contacts are provided by residues 56–75 (GAGVSTGSKLPDFRGKQGVW) and 116–119 (QNVD). The active-site Proton acceptor is His136. 4 residues coordinate Zn(2+): Cys144, Cys147, Cys163, and Cys169. NAD(+) contacts are provided by residues 216–218 (GTS), 242–244 (NYQ), and Val260.

This sequence belongs to the sirtuin family. Class IV subfamily. Zn(2+) is required as a cofactor.

It catalyses the reaction N(6)-acetyl-L-lysyl-[protein] + NAD(+) + H2O = 2''-O-acetyl-ADP-D-ribose + nicotinamide + L-lysyl-[protein]. Functionally, NAD-dependent protein deacetylase. The polypeptide is NAD-dependent protein deacetylase sir-2.4 (sir-2.4) (Caenorhabditis elegans).